The chain runs to 265 residues: 5'-nucleotidase SurE (265 aa).

Positions 8, 9, 39, and 96 each coordinate a divalent metal cation.

Belongs to the SurE nucleotidase family. A divalent metal cation is required as a cofactor.

The protein resides in the cytoplasm. It carries out the reaction a ribonucleoside 5'-phosphate + H2O = a ribonucleoside + phosphate. Its function is as follows. Nucleotidase that shows phosphatase activity on nucleoside 5'-monophosphates. The polypeptide is 5'-nucleotidase SurE (Dehalococcoides mccartyi (strain ATCC BAA-2100 / JCM 16839 / KCTC 5957 / BAV1)).